Here is a 194-residue protein sequence, read N- to C-terminus: Large ribosomal subunit protein bL25B (194 aa).

The protein belongs to the bacterial ribosomal protein bL25 family. CTC subfamily. In terms of assembly, part of the 50S ribosomal subunit; part of the 5S rRNA/L5/L18/L25 subcomplex. Contacts the 5S rRNA. Binds to the 5S rRNA independently of L5 and L18.

Functionally, this is one of the proteins that binds to the 5S RNA in the ribosome where it forms part of the central protuberance. This chain is Large ribosomal subunit protein bL25B, found in Symbiobacterium thermophilum (strain DSM 24528 / JCM 14929 / IAM 14863 / T).